Here is a 661-residue protein sequence, read N- to C-terminus: uncharacterized protein (661 aa).

16 consecutive transmembrane segments (helical) span residues 27–47 (LAIG…VSGA), 68–88 (VGFF…IHVV), 116–136 (LWLG…TGVG), 150–170 (VAAS…LVVA), 179–199 (WLGH…TAVT), 214–234 (AAIV…AAAL), 251–271 (GALA…GWAV), 279–299 (GLLA…RLLV), 313–333 (GAAL…VMTA), 369–389 (SLIG…FAAL), 396–416 (WPVG…FTSG), 435–455 (MTLN…TLAL), 488–508 (PITA…TPLF), 519–539 (EFMA…IIGI), 552–572 (IGLL…LMTM), and 599–619 (GGGI…VALV).

This sequence to M.leprae ML1998.

It is found in the cell membrane. This is an uncharacterized protein from Mycobacterium tuberculosis (strain CDC 1551 / Oshkosh).